We begin with the raw amino-acid sequence, 618 residues long: Probable Xaa-Pro aminopeptidase P (618 aa).

Positions 414, 425, 523, and 537 each coordinate Mn(2+).

It belongs to the peptidase M24B family. Mn(2+) serves as cofactor.

It carries out the reaction Release of any N-terminal amino acid, including proline, that is linked to proline, even from a dipeptide or tripeptide.. Catalyzes the removal of a penultimate prolyl residue from the N-termini of peptides. This chain is Probable Xaa-Pro aminopeptidase P (AMPP), found in Metarhizium robertsii (strain ARSEF 23 / ATCC MYA-3075) (Metarhizium anisopliae (strain ARSEF 23)).